The primary structure comprises 433 residues: Inward rectifier potassium channel 18 (433 aa).

The Cytoplasmic segment spans residues Met-1–Asp-77. Residues Ile-78–Val-104 traverse the membrane as a helical segment. Topologically, residues Ile-105–Gly-129 are extracellular. An intramembrane region (helical; Pore-forming) is located at residues Phe-130–Tyr-146. Positions Thr-143–Leu-148 match the Selectivity filter motif. At Gly-147–Cys-155 the chain is on the extracellular side. The helical transmembrane segment at Leu-156–Lys-183 threads the bilayer. The Cytoplasmic portion of the chain corresponds to Met-184–Ile-433. Residues Asp-387–Ile-433 form a disordered region. A compositionally biased stretch (basic and acidic residues) spans Gln-396–Arg-414.

Belongs to the inward rectifier-type potassium channel (TC 1.A.2.1) family. KCNJ12 subfamily. As to quaternary structure, can form heteromeric channels with Kir2.1/KCNJ2. Can form heteromeric channels with Kir2.2/KCNJ12. Probably phosphorylated by PKC; decreases single-channel open probability. Specifically expressed in skeletal muscle.

The protein localises to the cell membrane. The protein resides in the endoplasmic reticulum. The enzyme catalyses K(+)(in) = K(+)(out). Inward rectifier potassium channels are characterized by a greater tendency to allow potassium to flow into the cell rather than out of it. Their voltage dependence is regulated by the concentration of extracellular potassium; as external potassium is raised, the voltage range of the channel opening shifts to more positive voltages. The inward rectification is mainly due to the blockage of outward current by internal magnesium. This Homo sapiens (Human) protein is Inward rectifier potassium channel 18 (KCNJ18).